Consider the following 408-residue polypeptide: Argininosuccinate synthase (408 aa).

ATP is bound by residues 12–20 and A39; that span reads AYSGGLDTS. L-citrulline-binding residues include Y90 and S95. G120 serves as a coordination point for ATP. Residues T122, N126, and D127 each coordinate L-aspartate. N126 serves as a coordination point for L-citrulline. Residues R130, S181, S190, E266, and Y278 each contribute to the L-citrulline site.

Belongs to the argininosuccinate synthase family. Type 1 subfamily. In terms of assembly, homotetramer.

The protein localises to the cytoplasm. The enzyme catalyses L-citrulline + L-aspartate + ATP = 2-(N(omega)-L-arginino)succinate + AMP + diphosphate + H(+). Its pathway is amino-acid biosynthesis; L-arginine biosynthesis; L-arginine from L-ornithine and carbamoyl phosphate: step 2/3. This chain is Argininosuccinate synthase, found in Methylococcus capsulatus (strain ATCC 33009 / NCIMB 11132 / Bath).